The following is a 164-amino-acid chain: MMRIGHGYDVHQLVAERKLILGGVDIPHTLGLLGHSDADVLLHAICDAILGALGEGDIGKHFPDTDPAYKGISSIKLLHEVMRLAETKGYRLGNLDATIIAQRPKLAPFIGNMRENIAEACGTDVSRINVKATTTEQLGFEGRGEGISSHAVVLLNKAAHSEER.

A divalent metal cation contacts are provided by aspartate 9 and histidine 11. 4-CDP-2-C-methyl-D-erythritol 2-phosphate contacts are provided by residues aspartate 9–histidine 11 and histidine 35–serine 36. Histidine 43 contacts a divalent metal cation. 4-CDP-2-C-methyl-D-erythritol 2-phosphate is bound by residues aspartate 57 to glycine 59, phenylalanine 62 to aspartate 66, threonine 133 to glutamate 136, phenylalanine 140, and arginine 143.

The protein belongs to the IspF family. As to quaternary structure, homotrimer. The cofactor is a divalent metal cation.

It carries out the reaction 4-CDP-2-C-methyl-D-erythritol 2-phosphate = 2-C-methyl-D-erythritol 2,4-cyclic diphosphate + CMP. It functions in the pathway isoprenoid biosynthesis; isopentenyl diphosphate biosynthesis via DXP pathway; isopentenyl diphosphate from 1-deoxy-D-xylulose 5-phosphate: step 4/6. Its function is as follows. Involved in the biosynthesis of isopentenyl diphosphate (IPP) and dimethylallyl diphosphate (DMAPP), two major building blocks of isoprenoid compounds. Catalyzes the conversion of 4-diphosphocytidyl-2-C-methyl-D-erythritol 2-phosphate (CDP-ME2P) to 2-C-methyl-D-erythritol 2,4-cyclodiphosphate (ME-CPP) with a corresponding release of cytidine 5-monophosphate (CMP). The protein is 2-C-methyl-D-erythritol 2,4-cyclodiphosphate synthase of Syntrophotalea carbinolica (strain DSM 2380 / NBRC 103641 / GraBd1) (Pelobacter carbinolicus).